We begin with the raw amino-acid sequence, 1159 residues long: WASH complex subunit 5 (1159 aa).

Belongs to the strumpellin family. Component of the WASH complex.

It is found in the early endosome. In terms of biological role, acts at least in part as component of the WASH complex which seems to regulate washc1 nucleation-promoting factor (NPF) activity and is required for its membrane targeting during endosomal sorting. The polypeptide is WASH complex subunit 5 (Xenopus tropicalis (Western clawed frog)).